Here is a 181-residue protein sequence, read N- to C-terminus: Translation initiation factor IF-3 (181 aa).

The protein belongs to the IF-3 family. Monomer.

The protein resides in the cytoplasm. Its function is as follows. IF-3 binds to the 30S ribosomal subunit and shifts the equilibrium between 70S ribosomes and their 50S and 30S subunits in favor of the free subunits, thus enhancing the availability of 30S subunits on which protein synthesis initiation begins. This chain is Translation initiation factor IF-3, found in Mycoplasma capricolum subsp. capricolum (strain California kid / ATCC 27343 / NCTC 10154).